Here is a 139-residue protein sequence, read N- to C-terminus: Putative pre-16S rRNA nuclease (139 aa).

Belongs to the YqgF nuclease family.

The protein resides in the cytoplasm. Its function is as follows. Could be a nuclease involved in processing of the 5'-end of pre-16S rRNA. This chain is Putative pre-16S rRNA nuclease, found in Streptococcus thermophilus (strain ATCC BAA-491 / LMD-9).